The chain runs to 179 residues: Large ribosomal subunit protein uL6 (179 aa).

Basic and acidic residues predominate over residues 154-169 (EPYKGKGVKYEHEQIR). The interval 154-179 (EPYKGKGVKYEHEQIRRKAGKSGGKK) is disordered. Residues 170-179 (RKAGKSGGKK) show a composition bias toward basic residues.

Belongs to the universal ribosomal protein uL6 family. In terms of assembly, part of the 50S ribosomal subunit.

Functionally, this protein binds to the 23S rRNA, and is important in its secondary structure. It is located near the subunit interface in the base of the L7/L12 stalk, and near the tRNA binding site of the peptidyltransferase center. The protein is Large ribosomal subunit protein uL6 of Oleidesulfovibrio alaskensis (strain ATCC BAA-1058 / DSM 17464 / G20) (Desulfovibrio alaskensis).